The following is a 405-amino-acid chain: MAIKTLKDLLAEGVEGRHVLVRSDFNVPLNDDREITDAGRITASLPTIKALVDNGARVILMAHLGRPKGEVNEKFSLAPVAEALSEALGQYVALAGDVVGEDAHERANGLNDGDVLLLENVRFDPRETSKEEAERGEFADQLVALTAENGAFVSDGFGVVHRAQASVFDVAQRLPHYAGTLVEKELEVLGNKVASAPERPYAVILGGAKVSDKLGVIEALATKADKLIIGGGMCYTFLAAKGINVQKSLLQEEQINKCKELLEAYADKIVLPVDLVAAAEFASDAENKIVAIDEIPEGWMSLDVGPKTVEKFAEVLATSKTVFWNGPMGVFEFENFSAGTRGVAEAIIAATANGAFSVVGGGDSAAAVRLLGLDEDGFSHISTGGGASLELLEGKNLPGVSVLES.

Residues 24–26, R40, 63–66, R122, and R162 each bind substrate; these read DFN and HLGR. Residues K213, E332, and 361–364 each bind ATP; that span reads GGDS.

The protein belongs to the phosphoglycerate kinase family. As to quaternary structure, monomer.

Its subcellular location is the cytoplasm. It carries out the reaction (2R)-3-phosphoglycerate + ATP = (2R)-3-phospho-glyceroyl phosphate + ADP. Its pathway is carbohydrate degradation; glycolysis; pyruvate from D-glyceraldehyde 3-phosphate: step 2/5. The polypeptide is Phosphoglycerate kinase (Corynebacterium diphtheriae (strain ATCC 700971 / NCTC 13129 / Biotype gravis)).